The primary structure comprises 1156 residues: ATP-dependent RNA helicase glh-4 (1156 aa).

4 disordered regions span residues 1–81 (MSFS…GAPS), 194–213 (TGVG…GQQP), 231–423 (SSSG…DSST), and 436–522 (HRAS…SGLG). A compositionally biased stretch (basic and acidic residues) spans 12–22 (AEVKVAEDVPE). Residues 24-34 (NVPPPVEPPRA) are compositionally biased toward pro residues. 3 stretches are compositionally biased toward polar residues: residues 60–73 (ITTS…TTPK), 194–211 (TGVG…SFGQ), and 243–258 (TESS…TSQP). A compositionally biased stretch (gly residues) spans 259-281 (GFGGDSSTGFGSGLKAGFGGHGA). A compositionally biased stretch (polar residues) spans 307–319 (ASSSNESAFGQQS). 2 stretches are compositionally biased toward gly residues: residues 321–332 (GFGGATKNGFGG) and 342–358 (SKAG…GGQK). Polar residues-rich tracts occupy residues 362-371 (TESSGFPTKE) and 395-406 (PSTTDSSSGQQT). Gly residues predominate over residues 408-423 (GFGGASKPGFGGDSST). 2 stretches are compositionally biased toward polar residues: residues 440–451 (TAENSGLPTETT) and 464–476 (ASSS…GQQS). Residues 478–489 (GFGGATKNGFGG) show a composition bias toward gly residues. CCHC-type zinc fingers lie at residues 570–587 (RGCH…ECDK), 593–610 (FPCR…DCDQ), 616–633 (GPCR…DCDQ), 639–656 (GPCR…DCQN), and 665–682 (EPCR…ECPT). The Q motif signature appears at 736–764 (SFDGFKILPQDLHDNLKRMKMNRPTPIQR). In terms of domain architecture, Helicase ATP-binding spans 767 to 951 (FFPIMHGNDV…LPKFVKEGYT (185 aa)). An ATP-binding site is contributed by 780-787 (AHTGSGKT). Residues 897-900 (DEAD) carry the DEAD box motif. A Helicase C-terminal domain is found at 986–1139 (GIDENTVTLL…EVPEWLTEGA (154 aa)). Residues 1135–1156 (LTEGAGHQEEGGDDWNEQEQEW) form a disordered region. Residues 1145-1156 (GGDDWNEQEQEW) are compositionally biased toward acidic residues.

The protein belongs to the DEAD box helicase family. DDX4/VASA subfamily. Interacts (via C-terminus) with kgb-1.

The enzyme catalyses ATP + H2O = ADP + phosphate + H(+). Functionally, probable ATP-binding RNA helicase. May act redundantly with the P-granule component glh-1 to regulate the formation of the granular structure of P-granules in embryos. May protect somatic cells from excessive apoptosis during normal development. This is ATP-dependent RNA helicase glh-4 from Caenorhabditis elegans.